A 421-amino-acid chain; its full sequence is UDP-N-acetylglucosamine 1-carboxyvinyltransferase (421 aa).

22–23 (KN) lines the phosphoenolpyruvate pocket. Residue R93 coordinates UDP-N-acetyl-alpha-D-glucosamine. The active-site Proton donor is the C117. The residue at position 117 (C117) is a 2-(S-cysteinyl)pyruvic acid O-phosphothioketal. UDP-N-acetyl-alpha-D-glucosamine contacts are provided by residues 122-126 (RPVDL), D308, and V330.

Belongs to the EPSP synthase family. MurA subfamily.

The protein localises to the cytoplasm. It carries out the reaction phosphoenolpyruvate + UDP-N-acetyl-alpha-D-glucosamine = UDP-N-acetyl-3-O-(1-carboxyvinyl)-alpha-D-glucosamine + phosphate. It participates in cell wall biogenesis; peptidoglycan biosynthesis. Cell wall formation. Adds enolpyruvyl to UDP-N-acetylglucosamine. This is UDP-N-acetylglucosamine 1-carboxyvinyltransferase from Stutzerimonas stutzeri (strain A1501) (Pseudomonas stutzeri).